A 129-amino-acid chain; its full sequence is Trefoil factor 2 (129 aa).

The first 23 residues, 1 to 23, serve as a signal peptide directing secretion; it reads MGPRGAPLLAVVLVLGLHALVEG. P-type domains are found at residues 29 to 73 and 79 to 122; these read CRCS…FHPL and EQCV…FFPQ. Disulfide bonds link Cys-29-Cys-127, Cys-31-Cys-58, Cys-42-Cys-57, Cys-52-Cys-69, Cys-81-Cys-107, Cys-91-Cys-106, and Cys-101-Cys-118.

Stomach and pancreas.

It localises to the secreted. Its function is as follows. Inhibits gastrointestinal motility and gastric acid secretion. Could function as a structural component of gastric mucus, possibly by stabilizing glycoproteins in the mucus gel through interactions with carbohydrate side chains. This Mus musculus (Mouse) protein is Trefoil factor 2 (Tff2).